A 205-amino-acid chain; its full sequence is Methyltransferase-like 26 B (205 aa).

This sequence belongs to the UPF0585 family.

The chain is Methyltransferase-like 26 B from Danio rerio (Zebrafish).